The primary structure comprises 58 residues: Ribosome modulation factor (58 aa).

The protein belongs to the ribosome modulation factor family.

The protein resides in the cytoplasm. In terms of biological role, during stationary phase, converts 70S ribosomes to an inactive dimeric form (100S ribosomes). The protein is Ribosome modulation factor of Tolumonas auensis (strain DSM 9187 / NBRC 110442 / TA 4).